The primary structure comprises 365 residues: Aminomethyltransferase (365 aa).

Belongs to the GcvT family. The glycine cleavage system is composed of four proteins: P, T, L and H.

The catalysed reaction is N(6)-[(R)-S(8)-aminomethyldihydrolipoyl]-L-lysyl-[protein] + (6S)-5,6,7,8-tetrahydrofolate = N(6)-[(R)-dihydrolipoyl]-L-lysyl-[protein] + (6R)-5,10-methylene-5,6,7,8-tetrahydrofolate + NH4(+). The glycine cleavage system catalyzes the degradation of glycine. In Halalkalibacterium halodurans (strain ATCC BAA-125 / DSM 18197 / FERM 7344 / JCM 9153 / C-125) (Bacillus halodurans), this protein is Aminomethyltransferase.